A 586-amino-acid polypeptide reads, in one-letter code: Malonate--CoA ligase ACSF3, mitochondrial (586 aa).

The transit peptide at 1 to 89 (MPLPYVGMAL…SREICQLRAC (89 aa)) directs the protein to the mitochondrion. Residues 203–211 (TSGTTGRPK), Asp-457, Arg-471, and Lys-563 contribute to the ATP site.

The protein belongs to the ATP-dependent AMP-binding enzyme family.

It localises to the mitochondrion. The catalysed reaction is tetracosanoate + ATP + CoA = tetracosanoyl-CoA + AMP + diphosphate. The enzyme catalyses malonate + ATP + CoA = malonyl-CoA + AMP + diphosphate. Its function is as follows. Catalyzes the initial reaction in intramitochondrial fatty acid synthesis, by activating malonate and methylmalonate, but not acetate, into their respective CoA thioester. May have some preference toward very-long-chain substrates. This chain is Malonate--CoA ligase ACSF3, mitochondrial, found in Bos taurus (Bovine).